The chain runs to 2126 residues: Serine/threonine-protein kinase WNK1 (2126 aa).

Disordered regions lie at residues 1-80 (MSDG…FFRR) and 93-202 (LPGL…QQQD). Serine 17 is modified (phosphoserine). The segment covering 48-64 (RTEEYRRRRHTMDKDSR) has biased composition (basic and acidic residues). Residue threonine 58 is modified to Phosphothreonine. 2 stretches are compositionally biased toward low complexity: residues 101–111 (PQPSVPAVVPQ) and 127–141 (VASQ…AASP). Serine 165 and serine 172 each carry phosphoserine. In terms of domain architecture, Protein kinase spans 221–479 (LKFDIEIGRG…IKDLLNHAFF (259 aa)). Serine 231 is an ATP binding site. Phenylalanine 283 and leucine 299 together coordinate chloride. Residues 301–304 (TELM) and lysine 351 contribute to the ATP site. The active-site Proton acceptor is aspartate 368. The chloride site is built by leucine 369 and leucine 371. Residues serine 378 and serine 382 each carry the phosphoserine; by autocatalysis modification. Residues 488–555 (ELAEEDDGEK…VCEGDHKTMA (68 aa)) are autoinhibitory domain. Positions 573–588 (QLVREEQEKRKQEESS) are enriched in basic and acidic residues. The tract at residues 573 to 865 (QLVREEQEKR…SRHEKTSRPK (293 aa)) is disordered. Residues 593–614 (NEQQASVSQAGIQPLSVASTGI) show a composition bias toward polar residues. Low complexity predominate over residues 615-626 (PTAPTTSASVST). Residues 629-639 (EPEEPEADQHQ) form an interaction with KLHL3 region. Polar residues-rich tracts occupy residues 638–682 (HQQL…GSQH), 695–705 (TVSSIQAQSQP), and 713–733 (SMAQ…VLSS). A compositionally biased stretch (low complexity) spans 734 to 746 (QPVQHPQQQGIQP). The segment covering 750–789 (PQQAVQYSLPQAASSSEGTVQPVSQPQVSAGTQSSTQGVS) has biased composition (polar residues). Over residues 793–823 (PPEQTPITQSQPTQPVPLVSSVDSAHSDVAS) the composition is skewed to low complexity. Residues 826–836 (SDGNENAPSSS) are compositionally biased toward polar residues. Residues 844-865 (TKRHYRKSVRSRSRHEKTSRPK) are compositionally biased toward basic residues. An RFXV motif 1 motif is present at residues 1003-1006 (RFIV). Position 1007 is a phosphoserine (serine 1007). Disordered stretches follow at residues 1474–1507 (GQVS…LTKT) and 1557–1595 (IPVT…ASSS). Residues 1477–1496 (STPGTHASAPASTATGAKPG) are compositionally biased toward low complexity. A compositionally biased stretch (polar residues) spans 1567–1583 (STMSSTAVTEAGSQPQK). Residues 1604 to 1607 (RFQV) carry the RFXV motif 2 motif. The disordered stretch occupies residues 1610 to 1695 (TMDDAQKERK…TKVGRFQVTT (86 aa)). Basic and acidic residues predominate over residues 1613 to 1629 (DAQKERKNRSEDTKSVH). Residues 1632–1650 (SSTSESSVLSSSSPESTLV) show a composition bias toward low complexity. 2 short sequence motifs (RFXV motif) span residues 1690–1693 (RFQV) and 1702–1705 (RFSV). The span at 1709–1719 (EDKVTELKKEG) shows a compositional bias: basic and acidic residues. Disordered regions lie at residues 1709–1783 (EDKV…LCSK), 1856–1940 (VIIP…NLYS), and 1952–1990 (SLSA…KGTF). A Phosphoserine modification is found at serine 1723. Over residues 1738 to 1747 (PKKEKPELAE) the composition is skewed to basic and acidic residues. Phosphoserine occurs at positions 1755, 1756, 1771, 1773, 1776, and 1865. Residues 1866–1878 (GRRRRPTKSKGSK) are compositionally biased toward basic residues. The span at 1879 to 1889 (SSRSSSLGNKS) shows a compositional bias: low complexity. The span at 1890–1940 (PQLSGNLSGQSGTSVLNPQQTLHPPGNTPETGHNQLLQPLKPSPSSDNLYS) shows a compositional bias: polar residues. Positions 1957–1981 (GQGTSSTNTVGGTVSSQAAQAQPPA) are enriched in low complexity. Residues 1985–2005 (SRKGTFTDDLHKLVDNWARDA) are amphipathic alpha-helix. 2 positions are modified to phosphoserine: serine 2014 and serine 2030. The segment at 2076–2097 (PFGTQWSGTGGPAPQPLGQFQP) is disordered. Serine 2114 and serine 2116 each carry phosphoserine.

The protein belongs to the protein kinase superfamily. Ser/Thr protein kinase family. WNK subfamily. Interacts with WNK3. Interacts with WNK4; inhibiting the activity of WNK4. Interacts with SGK1; promoting its activation. Associates with the mTORC2 complex. Interacts with UVRAG. Interacts (via amphipathic alpha-helix region) with EMC2; promoting the ER membrane protein complex assembly. As to quaternary structure, interacts with isoform 1; inhibiting isoform 1 activity. The cofactor is Mg(2+). Autophosphorylated at Ser-378 and Ser-382, promoting its activity. Autophosphorylation at Ser-382 is inhibited by intracellular calcium. Phosphorylation at Thr-58 increases ability to activate SGK1. In terms of processing, ubiquitinated by the BCR(KLHL3) complex, leading to its degradation. Also ubiquitinated by the BCR(KLHL2) complex. Post-translationally, may be O-glycosylated.

It localises to the cytoplasm. Its subcellular location is the nucleus. The protein resides in the cytoskeleton. The protein localises to the spindle. It carries out the reaction L-seryl-[protein] + ATP = O-phospho-L-seryl-[protein] + ADP + H(+). The catalysed reaction is L-threonyl-[protein] + ATP = O-phospho-L-threonyl-[protein] + ADP + H(+). Its activity is regulated as follows. Activated in response to hyperosmotic stress: cell shrinkage promotes formation of a membraneless compartment that concentrates WNK1 with its substrates, OXSR1/OSR1 and STK39/SPAK. Activation requires autophosphorylation of Ser-382 and, to a lower extent, Ser-378. Autophosphorylation and subsequent activation is inhibited by increases in intracellular ionic strength: Cl(-) potently inhibits WNK1 kinase activity via direct binding. Also inhibited by K(+) ions. Inhibited by Compound 12 ((5-Chloro-2-(2-((methyl-d3)amino)thiazol-4-yl)- pyridin-4-yl)(4-(4-chlorobenzyl)piperazin-1-yl)methanone). Functionally, serine/threonine-protein kinase component of the WNK1-SPAK/OSR1 kinase cascade, which acts as a key regulator of blood pressure and regulatory volume increase by promoting ion influx. WNK1 mediates regulatory volume increase in response to hyperosmotic stress by acting as a molecular crowding sensor, which senses cell shrinkage and mediates formation of a membraneless compartment by undergoing liquid-liquid phase separation. The membraneless compartment concentrates WNK1 with its substrates, OXSR1/OSR1 and STK39/SPAK, promoting WNK1-dependent phosphorylation and activation of downstream kinases OXSR1/OSR1 and STK39/SPAK. Following activation, OXSR1/OSR1 and STK39/SPAK catalyze phosphorylation of ion cotransporters SLC12A1/NKCC2, SLC12A2/NKCC1, SLC12A5/KCC2 and SLC12A6/KCC3, regulating their activity. Phosphorylation of Na-K-Cl cotransporters SLC12A2/NKCC1 and SLC12A2/NKCC1 promote their activation and ion influx; simultaneously, phosphorylation of K-Cl cotransporters SLC12A5/KCC2 and SLC12A6/KCC3 inhibit their activity, blocking ion efflux. Also acts as a regulator of angiogenesis in endothelial cells. Also acts independently of the WNK1-SPAK/OSR1 kinase cascade by catalyzing phosphorylation of other substrates, such as SYT2, PCF11 and NEDD4L. Mediates phosphorylation of SYT2, regulating SYT2 association with phospholipids and membrane-binding. Regulates mRNA export in the nucleus by mediating phosphorylation of PCF11, thereby decreasing the association between PCF11 and POLR2A/RNA polymerase II and promoting mRNA export to the cytoplasm. Acts as a negative regulator of autophagy. Required for the abscission step during mitosis, independently of the WNK1-SPAK/OSR1 kinase cascade. WNK1 may also play a role in actin cytoskeletal reorganization. Also acts as a scaffold protein independently of its protein kinase activity: negatively regulates cell membrane localization of various transporters and channels, such as SLC4A4, SLC26A6, SLC26A9, TRPV4 and CFTR. Involved in the regulation of epithelial Na(+) channel (ENaC) by promoting activation of SGK1 in a kinase-independent manner. Probably activates SGK1 by acting as a scaffold protein that promotes the recruitment of SGK1 to the mTORC2 complex in response to chloride, leading to mTORC2-dependent phosphorylation and activation of SGK1. Acts as an assembly factor for the ER membrane protein complex independently of its protein kinase activity: associates with EMC2 in the cytoplasm via its amphipathic alpha-helix, and prevents EMC2 ubiquitination and subsequent degradation, thereby promoting EMC2 stabilization. Its function is as follows. Kinase-defective isoform specifically expressed in kidney, which acts as a dominant-negative regulator of the longer isoform 1. Does not directly inhibit WNK4 and has no direct effect on sodium and chloride ion transport. Down-regulates sodium-chloride cotransporter activity indirectly by inhibiting isoform 1, it associates with isoform 1 and attenuates its kinase activity. In kidney, may play an important role regulating sodium and potassium balance. In terms of biological role, kinase-defective isoform produced by alternative promoter usage and alternative splicing. This Rattus norvegicus (Rat) protein is Serine/threonine-protein kinase WNK1.